A 1016-amino-acid chain; its full sequence is Enhancer of polycomb-like protein 1 (1016 aa).

5 disordered regions span residues 1–50, 96–119, 450–488, 499–518, and 842–1016; these read MAIH…NDLE, LLGS…DASV, KEED…TIGT, GQVH…VKLP, and ARMR…PNRK. Positions 35 to 50 are enriched in polar residues; that stretch reads YKQSDLPTLNASNDLE. 2 stretches are compositionally biased toward basic and acidic residues: residues 103-116 and 457-473; these read DGDK…KKTD and ESSK…DSSR. The segment covering 475–488 has biased composition (polar residues); that stretch reads GSATSMPGSATIGT. Positions 842–883 are enriched in low complexity; it reads ARMRTLQQQQRNNKQQAAGQSSGSSSASLGSNTNSNSSISGQ. The span at 884 to 902 shows a compositional bias: polar residues; sequence ADQGQTNLTNSGITRQGGA. Residues 904-923 show a composition bias toward low complexity; it reads VNGSQTSTTNNTRSSVSGGS. Polar residues predominate over residues 928–956; sequence LPTQSSQRSNTNSPLLASQPQGYSQQQKF. Positions 960 to 971 are enriched in low complexity; that stretch reads PPTSQSQSQSPT. Residues 976-994 show a composition bias toward polar residues; that stretch reads QLQTSKMYNKHGSNITPSN.

It belongs to the enhancer of polycomb family. Component of the NuA4 histone acetyltransferase complex.

Its subcellular location is the nucleus. Functionally, component of the NuA4 histone acetyltransferase complex which is involved in transcriptional activation of selected genes principally by acetylation of nucleosomal histone H4 and H2A. The NuA4 complex is also involved in DNA repair. Involved in gene silencing by neighboring heterochromatin, blockage of the silencing spreading along the chromosome, and required for cell cycle progression through G2/M. The protein is Enhancer of polycomb-like protein 1 (EPL1) of Debaryomyces hansenii (strain ATCC 36239 / CBS 767 / BCRC 21394 / JCM 1990 / NBRC 0083 / IGC 2968) (Yeast).